A 279-amino-acid chain; its full sequence is Probable endonuclease 4 (279 aa).

Residues His-68, His-108, Glu-143, Asp-177, His-180, His-214, Asp-227, His-229, and Glu-259 each contribute to the Zn(2+) site.

The protein belongs to the AP endonuclease 2 family. Zn(2+) is required as a cofactor.

It catalyses the reaction Endonucleolytic cleavage to 5'-phosphooligonucleotide end-products.. Endonuclease IV plays a role in DNA repair. It cleaves phosphodiester bonds at apurinic or apyrimidinic (AP) sites, generating a 3'-hydroxyl group and a 5'-terminal sugar phosphate. This is Probable endonuclease 4 from Nitrosopumilus maritimus (strain SCM1).